A 241-amino-acid chain; its full sequence is Probable 2-phosphosulfolactate phosphatase (241 aa).

It belongs to the ComB family. The cofactor is Mg(2+).

The catalysed reaction is (2R)-O-phospho-3-sulfolactate + H2O = (2R)-3-sulfolactate + phosphate. The protein is Probable 2-phosphosulfolactate phosphatase of Deinococcus geothermalis (strain DSM 11300 / CIP 105573 / AG-3a).